Consider the following 227-residue polypeptide: Enolase-phosphatase E1 (227 aa).

D11 and E13 together coordinate Mg(2+). Residues S118–S119 and K161 each bind substrate. D186 is a binding site for Mg(2+).

This sequence belongs to the HAD-like hydrolase superfamily. MasA/MtnC family. Monomer. Requires Mg(2+) as cofactor.

It localises to the cytoplasm. The protein localises to the nucleus. It carries out the reaction 5-methylsulfanyl-2,3-dioxopentyl phosphate + H2O = 1,2-dihydroxy-5-(methylsulfanyl)pent-1-en-3-one + phosphate. It participates in amino-acid biosynthesis; L-methionine biosynthesis via salvage pathway; L-methionine from S-methyl-5-thio-alpha-D-ribose 1-phosphate: step 3/6. The protein operates within amino-acid biosynthesis; L-methionine biosynthesis via salvage pathway; L-methionine from S-methyl-5-thio-alpha-D-ribose 1-phosphate: step 4/6. In terms of biological role, bifunctional enzyme that catalyzes the enolization of 2,3-diketo-5-methylthiopentyl-1-phosphate (DK-MTP-1-P) into the intermediate 2-hydroxy-3-keto-5-methylthiopentenyl-1-phosphate (HK-MTPenyl-1-P), which is then dephosphorylated to form the acireductone 1,2-dihydroxy-3-keto-5-methylthiopentene (DHK-MTPene). The polypeptide is Enolase-phosphatase E1 (Saccharomyces cerevisiae (strain RM11-1a) (Baker's yeast)).